The primary structure comprises 174 residues: MAAAAELRLLEKSLGLKPGNKYSAQGERQIPVLQTNNGPSLMGLSTIATHLVKQASKEHLLGSTAEEKAMVQQWLEFRVTRVDGHSSKEDTQTLLKDLNSYLEDKVYLAGHNITLADILLYYGLHRFIVDLTVQEKEKYLNVSRWFCHIQHYPDIRQHLSSIVFIKNRLYANSH.

Ala2 carries the N-acetylalanine modification. An N-terminal region spans residues 2-56; the sequence is AAAAELRLLEKSLGLKPGNKYSAQGERQIPVLQTNNGPSLMGLSTIATHLVKQAS. Residues 50-173 form the GST C-terminal domain; it reads HLVKQASKEH…FIKNRLYANS (124 aa). Residues 57-63 are linker; the sequence is KEHLLGS. The segment at 64 to 152 is C-terminal; that stretch reads TAEEKAMVQQ…SRWFCHIQHY (89 aa). Lys138 carries the post-translational modification N6-acetyllysine. Residues 153–169 adopt a coiled-coil conformation; that stretch reads PDIRQHLSSIVFIKNRL.

As to quaternary structure, part of a multisubunit complex that groups tRNA ligases for Arg (RARS1), Asp (DARS1), Gln (QARS1), Ile (IARS1), Leu (LARS1), Lys (KARS1), Met (MARS1) the bifunctional ligase for Glu and Pro (EPRS1) and the auxiliary subunits AIMP1/p43, AIMP2/p38 and EEF1E1/p18. Can interact simultaneously with MARS1 and EPRS1. Forms a linear complex that contains MARS1, EEF1E1, EPRS1 and AIMP2 that is at the core of the multisubunit complex. Interacts with ATM and ATR. The interaction with ATM, which takes place independently of TP53, is induced by DNA damage that may occur during genotoxic stress or cell growth. The interaction with ATR is enhanced by UV irradiation.

The protein localises to the cytoplasm. It localises to the nucleus. Its function is as follows. Positive modulator of ATM response to DNA damage. This chain is Eukaryotic translation elongation factor 1 epsilon-1 (Eef1e1), found in Mus musculus (Mouse).